The following is a 362-amino-acid chain: Ferredoxin--NADP reductase, leaf isozyme 1, chloroplastic (362 aa).

The N-terminal 62 residues, 1–62, are a transit peptide targeting the chloroplast; that stretch reads MAAVTAAAVS…DAAAVAAAPA (62 aa). Residues 83–205 form the FAD-binding FR-type domain; that stretch reads KEPYVGKCLL…TGPVGKEMLM (123 aa). FAD is bound by residues 141-144, 162-164, Tyr168, 179-181, and Thr220; these read RLYS, CVK, and VCS. NADP(+)-binding residues include Ser144 and Lys164. Cys180 and Cys185 form a disulfide bridge. Residue Ser181 is modified to Phosphoserine. NADP(+) contacts are provided by residues Thr220, 252–253, 282–283, Lys292, 321–322, and Glu360; these read VP, SR, and GL.

The protein belongs to the ferredoxin--NADP reductase type 1 family. As to quaternary structure, component of high molecular weight thylakoid LFNRs-containing protein complexes containing LIR1, LFNR1, LFNR2, TIC62 and TROL proteins. Interacts directly with LIR1 and TIC62; LIR1 increases the affinity of LFNR1 and LFNR2 for TIC62. FAD is required as a cofactor. In terms of processing, may form interchain disulfide bonds with LIR1.

The protein resides in the plastid. Its subcellular location is the chloroplast stroma. It is found in the chloroplast thylakoid membrane. It carries out the reaction 2 reduced [2Fe-2S]-[ferredoxin] + NADP(+) + H(+) = 2 oxidized [2Fe-2S]-[ferredoxin] + NADPH. Its pathway is energy metabolism; photosynthesis. In terms of biological role, may play a key role in regulating the relative amounts of cyclic and non-cyclic electron flow to meet the demands of the plant for ATP and reducing power. The chain is Ferredoxin--NADP reductase, leaf isozyme 1, chloroplastic from Oryza sativa subsp. japonica (Rice).